Here is a 295-residue protein sequence, read N- to C-terminus: 4-hydroxy-tetrahydrodipicolinate synthase (295 aa).

Position 47 (Thr47) interacts with pyruvate. The active-site Proton donor/acceptor is Tyr135. Lys163 (schiff-base intermediate with substrate) is an active-site residue. Ile206 serves as a coordination point for pyruvate.

This sequence belongs to the DapA family. In terms of assembly, homodimer.

Its subcellular location is the cytoplasm. The catalysed reaction is L-aspartate 4-semialdehyde + pyruvate = (2S,4S)-4-hydroxy-2,3,4,5-tetrahydrodipicolinate + H2O + H(+). The protein operates within amino-acid biosynthesis; L-lysine biosynthesis via DAP pathway; (S)-tetrahydrodipicolinate from L-aspartate: step 3/4. Its function is as follows. Catalyzes the condensation of (S)-aspartate-beta-semialdehyde [(S)-ASA] and pyruvate to 4-hydroxy-tetrahydrodipicolinate (HTPA). The sequence is that of 4-hydroxy-tetrahydrodipicolinate synthase from Staphylococcus aureus (strain Mu50 / ATCC 700699).